The primary structure comprises 487 residues: Putative KilA-N domain-containing protein L37 (487 aa).

Positions 1–12 (MKVQKSSKKPLK) are enriched in basic residues. Positions 1–137 (MKVQKSSKKP…DINSDDDNNL (137 aa)) are disordered. Over residues 22–34 (KSGSKSMKSSKSS) the composition is skewed to low complexity. Acidic residues-rich tracts occupy residues 47–77 (DSEI…ESSD) and 111–136 (VLDD…DDNN). One can recognise a KilA-N domain in the interval 175–284 (EISKGIYGTF…HKVSKIVNDY (110 aa)). Positions 290–338 (FDKHEQLIKGKDDKIAELTRKIDKQTSLMKDQKSTIKEQDKKINELLSK) form a coiled coil.

This is Putative KilA-N domain-containing protein L37 from Acanthamoeba polyphaga mimivirus (APMV).